The sequence spans 177 residues: Protein ParB (177 aa).

Residues 1–26 (MKRRSYAMLRAAAALAVLVVASPAWA) form the signal peptide. One can recognise a TNase-like domain in the interval 27–157 (ELRGEVVRII…RGKRVGLWSD (131 aa)). Residues arginine 53, glutamate 61, and arginine 95 contribute to the active site.

In terms of assembly, monomer. It depends on Ca(2+) as a cofactor. In terms of processing, the N-terminus is blocked.

It is found in the secreted. With respect to regulation, endonuclease activity is inhibited by EDTA. Functionally, involved in plasmid partition. An endonuclease that acts on supercoiled dsDNA, converting it first to open circular DNA and then linearizing it. Preferentially cleaves regions in dsDNA that are capable of forming ssDNA, such as AT-rich regions and sequences that can form cruciforms. Has poor endonucleolytic activity on linear DNA, has 5'-3' exonuclease activity on dsDNA cleaving generating 3'-phosphonucleotides. This is Protein ParB from Escherichia coli.